The following is a 303-amino-acid chain: Succinate--CoA ligase [ADP-forming] subunit alpha (303 aa).

CoA-binding positions include 20 to 23 (TGSE), K46, and 108 to 110 (ITE). Residue Y173 coordinates substrate. The Tele-phosphohistidine intermediate role is filled by H259.

The protein belongs to the succinate/malate CoA ligase alpha subunit family. As to quaternary structure, heterotetramer of two alpha and two beta subunits.

It catalyses the reaction succinate + ATP + CoA = succinyl-CoA + ADP + phosphate. The enzyme catalyses GTP + succinate + CoA = succinyl-CoA + GDP + phosphate. It participates in carbohydrate metabolism; tricarboxylic acid cycle; succinate from succinyl-CoA (ligase route): step 1/1. Its function is as follows. Succinyl-CoA synthetase functions in the citric acid cycle (TCA), coupling the hydrolysis of succinyl-CoA to the synthesis of either ATP or GTP and thus represents the only step of substrate-level phosphorylation in the TCA. The alpha subunit of the enzyme binds the substrates coenzyme A and phosphate, while succinate binding and nucleotide specificity is provided by the beta subunit. The protein is Succinate--CoA ligase [ADP-forming] subunit alpha of Mycobacterium tuberculosis (strain CDC 1551 / Oshkosh).